The chain runs to 172 residues: MRCPFCGAPDTRVIDSRLAGEGDQVRRRRECLSCSERFTTYENAELNMPRVVKRDGSREPFNEDKLKSGMTHALEKRAVSTDKVEEAVARIKRKLLGQGEREVDSRRIGEWVMEELRNLDQVAYIRFASVYLSFADVQAFREVIERLEKDLTPEMRKHQIPLLGDEEGEGKD.

A zinc finger spans residues 3 to 34 (CPFCGAPDTRVIDSRLAGEGDQVRRRRECLSC). The 91-residue stretch at 49-139 (PRVVKRDGSR…VYLSFADVQA (91 aa)) folds into the ATP-cone domain.

This sequence belongs to the NrdR family. Zn(2+) is required as a cofactor.

Its function is as follows. Negatively regulates transcription of bacterial ribonucleotide reductase nrd genes and operons by binding to NrdR-boxes. The sequence is that of Transcriptional repressor NrdR from Thioalkalivibrio sulfidiphilus (strain HL-EbGR7).